The chain runs to 792 residues: 5-methyltetrahydropteroyltriglutamate--homocysteine methyltransferase (792 aa).

5-methyltetrahydropteroyltri-L-glutamate is bound by residues 16-19 (RELK) and lysine 112. Residues 432 to 434 (IGS) and glutamate 485 contribute to the L-homocysteine site. L-methionine contacts are provided by residues 432 to 434 (IGS) and glutamate 485. 5-methyltetrahydropteroyltri-L-glutamate contacts are provided by residues 516–517 (RC) and tryptophan 562. L-homocysteine is bound at residue aspartate 600. Residue aspartate 600 participates in L-methionine binding. Glutamate 606 lines the 5-methyltetrahydropteroyltri-L-glutamate pocket. Zn(2+)-binding residues include histidine 642, cysteine 644, and glutamate 666. Catalysis depends on histidine 695, which acts as the Proton donor. Cysteine 727 contributes to the Zn(2+) binding site.

This sequence belongs to the vitamin-B12 independent methionine synthase family. It depends on Zn(2+) as a cofactor.

It catalyses the reaction 5-methyltetrahydropteroyltri-L-glutamate + L-homocysteine = tetrahydropteroyltri-L-glutamate + L-methionine. The protein operates within amino-acid biosynthesis; L-methionine biosynthesis via de novo pathway; L-methionine from L-homocysteine (MetE route): step 1/1. Catalyzes the transfer of a methyl group from 5-methyltetrahydrofolate to homocysteine resulting in methionine formation. In Cupriavidus necator (strain ATCC 17699 / DSM 428 / KCTC 22496 / NCIMB 10442 / H16 / Stanier 337) (Ralstonia eutropha), this protein is 5-methyltetrahydropteroyltriglutamate--homocysteine methyltransferase.